A 595-amino-acid chain; its full sequence is Alginate biosynthesis sensor protein KinB (595 aa).

Topologically, residues 1-12 (MSMPLPMKLRTR) are cytoplasmic. Residues 13–33 (LFLSISALITVSLFGLLLGLF) form a helical membrane-spanning segment. The Periplasmic portion of the chain corresponds to 34-167 (SVMQLGRAQE…SDAETSARHR (134 aa)). The helical transmembrane segment at 168–188 (AYLVAGLLGLVGVAILLIGFV) threads the bilayer. Topologically, residues 189–595 (TAHSIARRFG…GARFYMLLPV (407 aa)) are cytoplasmic. The region spanning 195 to 247 (RRFGAPIETLARAADRIGEGDFDVTLPMTNVAEVGQLTRRFGLMAEALRQYRK) is the HAMP domain. Residues 258–323 (RRLQAVLDSI…AVEKALLGEV (66 aa)) enclose the PAS domain. The PAC domain maps to 327–369 (AMPDLVVDVAGESRLLAWSLYPVTHPGGHSVGAVLVVRDVTEQ). The Histidine kinase domain occupies 382–595 (RASHELRTPV…GARFYMLLPV (214 aa)). Position 385 is a phosphohistidine; by autocatalysis (H385).

Autophosphorylated.

The protein localises to the cell inner membrane. The catalysed reaction is ATP + protein L-histidine = ADP + protein N-phospho-L-histidine.. Member of the two-component regulatory system AlgB/KinB involved in regulation of alginate biosynthesis genes. KinB functions as a membrane-associated protein kinase that phosphorylates AlgB, probably in response to environmental signals. This chain is Alginate biosynthesis sensor protein KinB (kinB), found in Pseudomonas aeruginosa.